Here is a 1117-residue protein sequence, read N- to C-terminus: MTVSGRSSWQNGKTTNAMRAGKLATERDLESANYGSRSVEKLRHERAVGNLNKGRFLGMNKWSDEQLKHSMARYEDLAATRHNLFAVIMPSGCGKTSLARTYGMVDVDELVSRAEHDQYVEMRNEIVCGRGDWHDHNTLWFARLNQTLALLDYSVPVVIFVHTEETALEIGARPVACLTLETTAHEMNISGRGPKFREFSRESLRSCKPSNRVPNQYRFKSNKELEAFFLEVMNVSGLPVGAPFKYSTSIWNSSYSRDVPGWILRGERAGTQQVSINELRLLFEQGKIPKECVDYYVRASYVPTQFDFGVTMFEWSQALGQLPGCYNSRRDFDTLTDLMGVFPPHSPKEVTRSNVTLRTLCHTFDILSMPDAKEIASYHVGEGHTLVTNLLANWKGITQFTTVSHLVFPWFKVCERDWSDKMKTLHSLVRCSKFFMNTRITEKDRQALMYMDLLVGRGEYTVDEMAEVELRTDDTYNTKHLSYDPNRQVFTNQQYKKDFITSVEEAYVRLKIEPKPVNVDGFIDFYHRRASWLTKGGLVYNKLPPEMKKFGGQVFDAIYNTCREIQGRHNKKSLFEVYELAEVLQGANENNFNLTKTQIKYEVGKKDRTLLPGTLVHFVVFTYVLYLAEKQGQIGSVRLNTDSEVDIRYFDKKMCTGVFHVLYDWADFNEQHSAWEMGVVVDYLKHLIVAPRDYAVFVEAIVAGMYNMGLHDRDGNVHKIWRGLYSGWRGTTWINTVLNFCYVHIALQNVERLFGVRVVLYVDHGGDDIDLGLSEPAVMPWFLEVMDAMLFKANKWKQMFGTRSEFFRNTICDGRVYASPTRALASFVAGDWEGAGRATVKERVVSLLDQIAKLRRRGCSEELCQGLTIATISHWCRIKDGEDWLSLPAEIIHGHPDDGGLGVPDRDNNFWRLEEKVPEINEEWYKVVVPDYKASRDYVNVLARDVEKFSLVIEEREKLARKLSEDSYDIEKSVDHERWKHLLNFRTRVIAKELAVEPMEDSVVFEGFLEYEVEEGTEKKFDLASRYQEFVSYLSLNGRAITKEELLDLMSDGEVCLEAIEFQGDIYYARLVPEFIAYRATMFCKEAINKGVCDAISAQLFFRTICWMSASVFEHAI.

Polar residues predominate over residues 1-17 (MTVSGRSSWQNGKTTNA). The tract at residues 1–23 (MTVSGRSSWQNGKTTNAMRAGKL) is disordered.

It catalyses the reaction RNA(n) + a ribonucleoside 5'-triphosphate = RNA(n+1) + diphosphate. Its function is as follows. RNA-dependent RNA polymerase which replicates the viral genome. This chain is RNA-directed RNA polymerase (p1), found in Penicillium chrysogenum (Penicillium notatum).